The sequence spans 579 residues: General transcriptional corepressor tupA (579 aa).

A compositionally biased stretch (polar residues) spans 83–101; the sequence is NINASQRDLNSPSTFRSNS. The interval 83–258 is disordered; sequence NINASQRDLN…ENGKEKGTDW (176 aa). 3 stretches are compositionally biased toward low complexity: residues 109 to 128, 157 to 198, and 207 to 224; these read NNNN…NNNN, QQPG…LSPL, and MGNN…NNNN. The segment covering 227 to 256 has biased composition (basic and acidic residues); the sequence is KKPDMEEVKEEDRRRHDTEMSEENGKEKGT. 7 WD repeats span residues 279–319, 325–364, 367–406, 413–452, 455–494, 501–540, and 543–579; these read QHNS…HAFV, DGDL…IQHT, GHEL…CAFT, GPKN…FLER, GHLD…SRSR, GHKD…THMM, and GHKN…KYDS.

The protein belongs to the WD repeat TUP1 family. In terms of assembly, associates with trfA to form the trfA-tupA corepressor complex.

The protein resides in the nucleus. In terms of biological role, acts as a component of the trfA-tupA corepressor complex which is involved in the repression of many genes in a wide variety of physiological processes. May also be involved in the derepression of at least some target genes. The complex is recruited to target genes by interaction with DNA-bound transcriptional repressors. The complex recruits histone deacetylases to produce a repressive chromatin structure, interacts with hypoacetylated N-terminal tails of histones H3 and H4 that have been programmed for repression by the action of histone deacetylases and interferes directly with the transcriptional machinery by associating with the RNA polymerase II mediator complex. The polypeptide is General transcriptional corepressor tupA (tupA) (Dictyostelium discoideum (Social amoeba)).